Here is a 256-residue protein sequence, read N- to C-terminus: Follistatin-related protein 3 (256 aa).

An N-terminal signal peptide occupies residues 1 to 23; the sequence is MRSGALWPLLWGALVWTVGSVGA. In terms of domain architecture, TB spans 34–105; that stretch reads GVCWLQQGRE…SCDGVECGPG (72 aa). Disulfide bonds link cysteine 36–cysteine 59, cysteine 46–cysteine 90, cysteine 60–cysteine 93, cysteine 97–cysteine 108, cysteine 102–cysteine 117, cysteine 119–cysteine 151, cysteine 123–cysteine 144, and cysteine 133–cysteine 165. Asparagine 71 is a glycosylation site (N-linked (GlcNAc...) asparagine). One can recognise a Follistatin-like 1 domain in the interval 97–117; that stretch reads CDGVECGPGKACRMLGGRPHC. Kazal-like domains follow at residues 111-167 and 187-243; these read LGGR…RCQK and SAHC…ICTG. Residues 168–191 form the Follistatin-like 2 domain; sequence SCAQVVCPRPQSCLVDQTGSAHCV. 3 disulfide bridges follow: cysteine 193/cysteine 227, cysteine 198/cysteine 220, and cysteine 209/cysteine 241. Residue asparagine 213 is glycosylated (N-linked (GlcNAc...) asparagine).

In terms of assembly, interacts with INHBA and INHBB. Interacts with FN1. Interacts with ADAM12. Interacts with MLLT10; the interaction enhances MLLT10 in vitro transcriptional activity and self-association. Interacts with MSTN. In terms of tissue distribution, abundantly expressed in heart, lung, kidney and testis. Continuously expressed in embryonic heart.

Its subcellular location is the secreted. It is found in the nucleus. The secreted form is a binding and antagonizing protein for members of the TGF-beta family, such as activin, BMP2 and MSTN. Inhibits activin A-, activin B-, BMP2- and MSDT-induced cellular signaling; more effective on activin A than on activin B. Involved in bone formation; inhibits osteoclast differentiation. Involved in hematopoiesis; involved in differentiation of hemopoietic progenitor cells, increases hematopoietic cell adhesion to fibronectin and seems to contribute to the adhesion of hematopoietic precursor cells to the bone marrow stroma. The nuclear form is probably involved in transcriptional regulation via interaction with MLLT10. The sequence is that of Follistatin-related protein 3 (Fstl3) from Mus musculus (Mouse).